Here is a 498-residue protein sequence, read N- to C-terminus: Angiopoietin-4 (498 aa).

Positions 1–22 (MPSPPAMLLGGLLLIVASTTVA) are cleaved as a signal peptide. A disordered region spans residues 51–80 (EPEPCPPEPEAFGGSNSLQRDSPAATLNLG). Residues 85–109 (QRMRQLEKMLENNTQWLQKLERYIQ) are a coiled coil. 8 N-linked (GlcNAc...) asparagine glycosylation sites follow: N96, N126, N158, N247, N295, N306, N332, and N424. Residues 186-254 (HELHRLQGHN…SSNSSLLQRQ (69 aa)) adopt a coiled-coil conformation. One can recognise a Fibrinogen C-terminal domain in the interval 277-497 (RAADQLFQDC…TTRMMVRPSG (221 aa)). C286 and C315 form a disulfide bridge. Cysteines 439 and 452 form a disulfide.

As to quaternary structure, homodimer; disulfide-linked. Interacts with TEK/TIE2.

The protein localises to the secreted. In terms of biological role, binds to TEK/TIE2, modulating ANGPT1 signaling. Can induce tyrosine phosphorylation of TEK/TIE2. Promotes endothelial cell survival, migration and angiogenesis. The chain is Angiopoietin-4 (ANGPT4) from Bos taurus (Bovine).